The following is a 1425-amino-acid chain: Protein NAP1 (1425 aa).

Polar residues-rich tracts occupy residues 1 to 20 (MANS…PTSV), 1299 to 1312 (TPLS…SPSV), and 1320 to 1329 (SMKNSTTPQR). Disordered regions lie at residues 1 to 24 (MANS…RSRE) and 1299 to 1425 (TPLS…KQHN). Over residues 1362-1405 (SETGNSRNNENNNNNKQRGSSRRSGPLDYSSSHKGGSGSNSTGP) the composition is skewed to low complexity.

It belongs to the HEM-1/HEM-2 family. Binds PIR. Expressed in roots, root hairs, hypocotyls, cotyledons, stems, leaves, trichomes, and flowers.

Functionally, involved in regulation of actin and microtubule organization. Part of a WAVE complex that activates the Arp2/3 complex. The chain is Protein NAP1 (NAP1) from Arabidopsis thaliana (Mouse-ear cress).